The primary structure comprises 360 residues: Chorismate synthase (360 aa).

2 residues coordinate NADP(+): arginine 48 and arginine 54. FMN is bound by residues 125-127, 246-247, glycine 286, 301-305, and arginine 327; these read RSS, NA, and KPTSS.

It belongs to the chorismate synthase family. Homotetramer. FMNH2 is required as a cofactor.

It catalyses the reaction 5-O-(1-carboxyvinyl)-3-phosphoshikimate = chorismate + phosphate. The protein operates within metabolic intermediate biosynthesis; chorismate biosynthesis; chorismate from D-erythrose 4-phosphate and phosphoenolpyruvate: step 7/7. In terms of biological role, catalyzes the anti-1,4-elimination of the C-3 phosphate and the C-6 proR hydrogen from 5-enolpyruvylshikimate-3-phosphate (EPSP) to yield chorismate, which is the branch point compound that serves as the starting substrate for the three terminal pathways of aromatic amino acid biosynthesis. This reaction introduces a second double bond into the aromatic ring system. The polypeptide is Chorismate synthase (Actinobacillus pleuropneumoniae serotype 5b (strain L20)).